Here is a 377-residue protein sequence, read N- to C-terminus: Glutamate 5-kinase (377 aa).

Lys20 is an ATP binding site. Residues Ser60, Asp147, and Asn159 each coordinate substrate. 179–180 lines the ATP pocket; it reads TD. Residues 285 to 363 form the PUA domain; sequence AGRLVIDAGA…DKVHQVLGEA (79 aa).

This sequence belongs to the glutamate 5-kinase family.

Its subcellular location is the cytoplasm. It carries out the reaction L-glutamate + ATP = L-glutamyl 5-phosphate + ADP. It participates in amino-acid biosynthesis; L-proline biosynthesis; L-glutamate 5-semialdehyde from L-glutamate: step 1/2. Catalyzes the transfer of a phosphate group to glutamate to form L-glutamate 5-phosphate. This is Glutamate 5-kinase from Acinetobacter baylyi (strain ATCC 33305 / BD413 / ADP1).